The chain runs to 398 residues: Acetate kinase 1 (398 aa).

Asparagine 9 is a Mg(2+) binding site. Position 16 (lysine 16) interacts with ATP. Substrate is bound at residue arginine 89. Residue aspartate 146 is the Proton donor/acceptor of the active site. ATP contacts are provided by residues 206–210 (HLGNG), 281–283 (DCR), and 329–333 (GIGEN). Glutamate 384 lines the Mg(2+) pocket.

The protein belongs to the acetokinase family. As to quaternary structure, homodimer. The cofactor is Mg(2+). It depends on Mn(2+) as a cofactor.

It localises to the cytoplasm. The enzyme catalyses acetate + ATP = acetyl phosphate + ADP. It functions in the pathway metabolic intermediate biosynthesis; acetyl-CoA biosynthesis; acetyl-CoA from acetate: step 1/2. In terms of biological role, catalyzes the formation of acetyl phosphate from acetate and ATP. Can also catalyze the reverse reaction. The sequence is that of Acetate kinase 1 from Vibrio cholerae serotype O1 (strain ATCC 39315 / El Tor Inaba N16961).